The chain runs to 348 residues: Dihydroorotase (348 aa).

The Zn(2+) site is built by His17 and His19. Residues 19 to 21 (HLR) and Asn45 each bind substrate. The Zn(2+) site is built by Lys103, His140, and His178. Lys103 bears the N6-carboxylysine mark. His140 contacts substrate. Leu223 contributes to the substrate binding site. Asp251 contributes to the Zn(2+) binding site. Asp251 is an active-site residue. 2 residues coordinate substrate: His255 and Ala267.

The protein belongs to the metallo-dependent hydrolases superfamily. DHOase family. Class II DHOase subfamily. In terms of assembly, homodimer. Zn(2+) serves as cofactor.

The catalysed reaction is (S)-dihydroorotate + H2O = N-carbamoyl-L-aspartate + H(+). Its pathway is pyrimidine metabolism; UMP biosynthesis via de novo pathway; (S)-dihydroorotate from bicarbonate: step 3/3. Functionally, catalyzes the reversible cyclization of carbamoyl aspartate to dihydroorotate. This is Dihydroorotase from Escherichia coli O6:K15:H31 (strain 536 / UPEC).